Reading from the N-terminus, the 259-residue chain is UPF0246 protein VFMJ11_2214 (259 aa).

The protein belongs to the UPF0246 family.

The chain is UPF0246 protein VFMJ11_2214 from Aliivibrio fischeri (strain MJ11) (Vibrio fischeri).